The primary structure comprises 344 residues: Phosphate acyltransferase (344 aa).

It belongs to the PlsX family. Homodimer. Probably interacts with PlsY.

The protein localises to the cytoplasm. It catalyses the reaction a fatty acyl-[ACP] + phosphate = an acyl phosphate + holo-[ACP]. The protein operates within lipid metabolism; phospholipid metabolism. Its function is as follows. Catalyzes the reversible formation of acyl-phosphate (acyl-PO(4)) from acyl-[acyl-carrier-protein] (acyl-ACP). This enzyme utilizes acyl-ACP as fatty acyl donor, but not acyl-CoA. This Cronobacter sakazakii (strain ATCC BAA-894) (Enterobacter sakazakii) protein is Phosphate acyltransferase.